We begin with the raw amino-acid sequence, 424 residues long: Cyclin-dependent kinase D-1 (424 aa).

The Protein kinase domain occupies 19–299 (YLKREVLGEG…AQQALEHRYF (281 aa)). Residues 25–33 (LGEGTYGVV) and lysine 48 each bind ATP. Threonine 29 is modified (phosphothreonine). Residue tyrosine 30 is modified to Phosphotyrosine. The active-site Proton acceptor is aspartate 141. Serine 168 carries the phosphoserine modification. The residue at position 174 (threonine 174) is a Phosphothreonine. 2 disordered regions span residues 303-337 (PAPTKPSQLPRPPPKGDSGNNKIPDLNLQDGPVVL) and 359-424 (ADRT…GYTE). Over residues 359-374 (ADRTEEHPSGARHMDD) the composition is skewed to basic and acidic residues.

Belongs to the protein kinase superfamily. CMGC Ser/Thr protein kinase family. CDC2/CDKX subfamily. Interacts with CYCH1-1. Expressed in actively dividing cells of roots, leaves and shoots. Expressed in the intercalary meristem and the elongation zone of internodes.

The protein localises to the nucleus. It catalyses the reaction L-seryl-[protein] + ATP = O-phospho-L-seryl-[protein] + ADP + H(+). It carries out the reaction L-threonyl-[protein] + ATP = O-phospho-L-threonyl-[protein] + ADP + H(+). The catalysed reaction is [DNA-directed RNA polymerase] + ATP = phospho-[DNA-directed RNA polymerase] + ADP + H(+). In terms of biological role, CDK-activating kinase that may control G1/S phase progression. May control the rate of cell differentiation to accomplish proper development of organs, or in response to a changing environment. Forms a complex with cyclin CYCH1-1 that phosphorylates CDKA-1 and the C-terminal domain (CTD) of the large subunit of RNA polymerase II. The sequence is that of Cyclin-dependent kinase D-1 (CDKD-1) from Oryza sativa subsp. japonica (Rice).